A 273-amino-acid chain; its full sequence is Large ribosomal subunit protein uL2 (273 aa).

Positions 228–273 are disordered; that stretch reads VDHPHGGGEGKTSGGRHPVTPWGFPTKGKKTRKNKRTSKFIVKKRK. The span at 254-273 shows a compositional bias: basic residues; sequence KGKKTRKNKRTSKFIVKKRK.

It belongs to the universal ribosomal protein uL2 family. Part of the 50S ribosomal subunit. Forms a bridge to the 30S subunit in the 70S ribosome.

One of the primary rRNA binding proteins. Required for association of the 30S and 50S subunits to form the 70S ribosome, for tRNA binding and peptide bond formation. It has been suggested to have peptidyltransferase activity; this is somewhat controversial. Makes several contacts with the 16S rRNA in the 70S ribosome. The chain is Large ribosomal subunit protein uL2 from Rickettsia canadensis (strain McKiel).